A 185-amino-acid polypeptide reads, in one-letter code: Ribosome-recycling factor (185 aa).

The interval 138–157 (ELKKLEKDHTASEDEVKRAQ) is disordered.

This sequence belongs to the RRF family.

It localises to the cytoplasm. Its function is as follows. Responsible for the release of ribosomes from messenger RNA at the termination of protein biosynthesis. May increase the efficiency of translation by recycling ribosomes from one round of translation to another. The sequence is that of Ribosome-recycling factor from Desulfitobacterium hafniense (strain DSM 10664 / DCB-2).